The chain runs to 603 residues: Bud site selection protein 8 (603 aa).

Residues 1–10 (MIQSDEDNLD) are compositionally biased toward acidic residues. Disordered regions lie at residues 1-25 (MIQS…GTSS), 83-150 (ASTS…SPSS), and 190-212 (ANRG…EPNE). Topologically, residues 1-515 (MIQSDEDNLD…GFRDVYSIEN (515 aa)) are extracellular. 2 stretches are compositionally biased toward low complexity: residues 11–25 (SSET…GTSS) and 84–95 (STSSSSSSNSSS). N-linked (GlcNAc...) asparagine glycans are attached at residues N92, N110, N211, N240, N271, and N333. Over residues 96-115 (ITQFHDTQDNNIPSNTTVRP) the composition is skewed to polar residues. Residues 286–479 (AGSIKSSTSD…NRKEDRHDAE (194 aa)) are disordered. The segment covering 325–335 (PSHNSDSSNES) has biased composition (low complexity). Residues 336-350 (SPKDHIGHNNEEKFS) show a composition bias toward basic and acidic residues. Residues N396 and N423 are each glycosylated (N-linked (GlcNAc...) asparagine). Residues 439–452 (KSQSSESDTGQNSI) show a composition bias toward polar residues. Over residues 463-479 (KQQEKTDNRKEDRHDAE) the composition is skewed to basic and acidic residues. A helical membrane pass occupies residues 516–536 (IIVILLCCSIVPPLFFIIGCS). Over 537-577 (SRRKLVSDYRLMRLLMNKEHRAALLQGFIWDVDLRWFRMFC) the chain is Cytoplasmic. A helical membrane pass occupies residues 578–598 (LILGAAETVIVMAGIAIGFGV). The Extracellular portion of the chain corresponds to 599–603 (GITRE).

Belongs to the BUD8/9 family. As to quaternary structure, interacts with RAX1 RAX2 at the proximal or distal pole in unbudded cells. In terms of processing, N- and O-glycosylated.

It localises to the cell membrane. Its subcellular location is the bud tip. Its function is as follows. Involved in positioning the distal bud pole signal. This Saccharomyces cerevisiae (strain ATCC 204508 / S288c) (Baker's yeast) protein is Bud site selection protein 8.